A 240-amino-acid polypeptide reads, in one-letter code: UDP-2,3-diacylglucosamine hydrolase (240 aa).

The Mn(2+) site is built by aspartate 9, histidine 11, aspartate 43, asparagine 81, and histidine 116. 81–82 (NR) lines the substrate pocket. Positions 124, 162, 166, 169, and 197 each coordinate substrate. 2 residues coordinate Mn(2+): histidine 197 and histidine 199.

The protein belongs to the LpxH family. The cofactor is Mn(2+).

It is found in the cell inner membrane. The enzyme catalyses UDP-2-N,3-O-bis[(3R)-3-hydroxytetradecanoyl]-alpha-D-glucosamine + H2O = 2-N,3-O-bis[(3R)-3-hydroxytetradecanoyl]-alpha-D-glucosaminyl 1-phosphate + UMP + 2 H(+). It functions in the pathway glycolipid biosynthesis; lipid IV(A) biosynthesis; lipid IV(A) from (3R)-3-hydroxytetradecanoyl-[acyl-carrier-protein] and UDP-N-acetyl-alpha-D-glucosamine: step 4/6. Functionally, hydrolyzes the pyrophosphate bond of UDP-2,3-diacylglucosamine to yield 2,3-diacylglucosamine 1-phosphate (lipid X) and UMP by catalyzing the attack of water at the alpha-P atom. Involved in the biosynthesis of lipid A, a phosphorylated glycolipid that anchors the lipopolysaccharide to the outer membrane of the cell. In Neisseria meningitidis serogroup C / serotype 2a (strain ATCC 700532 / DSM 15464 / FAM18), this protein is UDP-2,3-diacylglucosamine hydrolase.